The primary structure comprises 237 residues: Pyridoxine 5'-phosphate synthase (237 aa).

Residues Asn-7 and Arg-18 each contribute to the 3-amino-2-oxopropyl phosphate site. His-43 (proton acceptor) is an active-site residue. 1-deoxy-D-xylulose 5-phosphate contacts are provided by Arg-45 and His-50. The Proton acceptor role is filled by Glu-70. Thr-100 contributes to the 1-deoxy-D-xylulose 5-phosphate binding site. Residue His-190 is the Proton donor of the active site. Residues Asp-191 and 213–214 contribute to the 3-amino-2-oxopropyl phosphate site; that span reads GH.

Belongs to the PNP synthase family. In terms of assembly, homooctamer; tetramer of dimers.

It localises to the cytoplasm. The enzyme catalyses 3-amino-2-oxopropyl phosphate + 1-deoxy-D-xylulose 5-phosphate = pyridoxine 5'-phosphate + phosphate + 2 H2O + H(+). The protein operates within cofactor biosynthesis; pyridoxine 5'-phosphate biosynthesis; pyridoxine 5'-phosphate from D-erythrose 4-phosphate: step 5/5. Catalyzes the complicated ring closure reaction between the two acyclic compounds 1-deoxy-D-xylulose-5-phosphate (DXP) and 3-amino-2-oxopropyl phosphate (1-amino-acetone-3-phosphate or AAP) to form pyridoxine 5'-phosphate (PNP) and inorganic phosphate. This is Pyridoxine 5'-phosphate synthase from Christiangramia forsetii (strain DSM 17595 / CGMCC 1.15422 / KT0803) (Gramella forsetii).